The sequence spans 435 residues: Eukaryotic translation initiation factor 3 subunit E (435 aa).

Residues 219 to 392 (FFNHPKGRDL…GHVVMGTQPL (174 aa)) enclose the PCI domain.

This sequence belongs to the eIF-3 subunit E family. In terms of assembly, component of the eukaryotic translation initiation factor 3 (eIF-3) complex. The eIF-3 complex interacts with pix. Interacts with mxt.

The protein resides in the cytoplasm. Component of the eukaryotic translation initiation factor 3 (eIF-3) complex, which is involved in protein synthesis of a specialized repertoire of mRNAs and, together with other initiation factors, stimulates binding of mRNA and methionyl-tRNAi to the 40S ribosome. The eIF-3 complex specifically targets and initiates translation of a subset of mRNAs involved in cell proliferation. This Drosophila erecta (Fruit fly) protein is Eukaryotic translation initiation factor 3 subunit E (eIF3-S6).